The primary structure comprises 330 residues: Anthranilate phosphoribosyltransferase (330 aa).

Residues Gly-77, 80-81 (GD), Thr-85, 87-90 (NIST), 105-113 (KHGNKAVSS), and Ser-117 each bind 5-phospho-alpha-D-ribose 1-diphosphate. Gly-77 serves as a coordination point for anthranilate. Ser-89 is a Mg(2+) binding site. Asn-108 provides a ligand contact to anthranilate. Arg-163 is a binding site for anthranilate. The Mg(2+) site is built by Asp-222 and Glu-223.

This sequence belongs to the anthranilate phosphoribosyltransferase family. As to quaternary structure, homodimer. Mg(2+) serves as cofactor.

The catalysed reaction is N-(5-phospho-beta-D-ribosyl)anthranilate + diphosphate = 5-phospho-alpha-D-ribose 1-diphosphate + anthranilate. It participates in amino-acid biosynthesis; L-tryptophan biosynthesis; L-tryptophan from chorismate: step 2/5. In terms of biological role, catalyzes the transfer of the phosphoribosyl group of 5-phosphorylribose-1-pyrophosphate (PRPP) to anthranilate to yield N-(5'-phosphoribosyl)-anthranilate (PRA). In Pelagibacter ubique (strain HTCC1062), this protein is Anthranilate phosphoribosyltransferase.